A 398-amino-acid chain; its full sequence is S-adenosylmethionine synthase (398 aa).

ATP is bound at residue His16. Residue Asp18 participates in Mg(2+) binding. K(+) is bound at residue Glu51. Positions 64 and 108 each coordinate L-methionine. A flexible loop region spans residues 108–118 (QSADIAQGVDA). Residues 176–178 (DSK), 242–243 (KF), Asp251, 257–258 (RK), Ala274, and Lys278 each bind ATP. An L-methionine-binding site is contributed by Asp251. Lys282 is a binding site for L-methionine.

Belongs to the AdoMet synthase family. As to quaternary structure, homotetramer; dimer of dimers. The cofactor is Mg(2+). K(+) is required as a cofactor.

The protein resides in the cytoplasm. It carries out the reaction L-methionine + ATP + H2O = S-adenosyl-L-methionine + phosphate + diphosphate. Its pathway is amino-acid biosynthesis; S-adenosyl-L-methionine biosynthesis; S-adenosyl-L-methionine from L-methionine: step 1/1. Functionally, catalyzes the formation of S-adenosylmethionine (AdoMet) from methionine and ATP. The overall synthetic reaction is composed of two sequential steps, AdoMet formation and the subsequent tripolyphosphate hydrolysis which occurs prior to release of AdoMet from the enzyme. This is S-adenosylmethionine synthase from Bradyrhizobium diazoefficiens (strain JCM 10833 / BCRC 13528 / IAM 13628 / NBRC 14792 / USDA 110).